We begin with the raw amino-acid sequence, 1167 residues long: DNA-directed RNA polymerase subunit beta (1167 aa).

The interval 1–27 (MAVSPANQATAATTSAESRSEATGIPG) is disordered. Over residues 9-23 (ATAATTSAESRSEAT) the composition is skewed to low complexity.

This sequence belongs to the RNA polymerase beta chain family. The RNAP catalytic core consists of 2 alpha, 1 beta, 1 beta' and 1 omega subunit. When a sigma factor is associated with the core the holoenzyme is formed, which can initiate transcription.

It carries out the reaction RNA(n) + a ribonucleoside 5'-triphosphate = RNA(n+1) + diphosphate. Its function is as follows. DNA-dependent RNA polymerase catalyzes the transcription of DNA into RNA using the four ribonucleoside triphosphates as substrates. The protein is DNA-directed RNA polymerase subunit beta of Amycolatopsis mediterranei (strain S699) (Nocardia mediterranei).